Here is a 627-residue protein sequence, read N- to C-terminus: Membrane protein insertase YidC (627 aa).

The chain crosses the membrane as a helical span at residues 8–28 (LFLALILSMGIWMGVNYFFFP). The span at 33 to 57 (KKNTETKQTQSDKTSENTKQQITSG) shows a compositional bias: polar residues. The tract at residues 33–68 (KKNTETKQTQSDKTSENTKQQITSGKTKESNSADPV) is disordered. Over residues 58-68 (KTKESNSADPV) the composition is skewed to basic and acidic residues. Helical transmembrane passes span 417–437 (FTIP…KLVF), 488–508 (VGGC…YTAF), 536–556 (AIPY…LMVG), and 575–595 (MLMY…PSGV).

It belongs to the OXA1/ALB3/YidC family. Type 1 subfamily. In terms of assembly, interacts with the Sec translocase complex via SecD. Specifically interacts with transmembrane segments of nascent integral membrane proteins during membrane integration.

It localises to the cell inner membrane. Its function is as follows. Required for the insertion and/or proper folding and/or complex formation of integral membrane proteins into the membrane. Involved in integration of membrane proteins that insert both dependently and independently of the Sec translocase complex, as well as at least some lipoproteins. Aids folding of multispanning membrane proteins. The protein is Membrane protein insertase YidC of Leptospira interrogans serogroup Icterohaemorrhagiae serovar copenhageni (strain Fiocruz L1-130).